The chain runs to 1160 residues: Nck-associated protein 1 homolog (1160 aa).

It belongs to the HEM-1/HEM-2 family. Part of a Scar/WAVE complex containing brk1, scrA, abiA, pirA and napA.

Involved in regulation of actin and microtubule organization. Involved in cell adhesion. This is Nck-associated protein 1 homolog (napA) from Dictyostelium discoideum (Social amoeba).